Here is a 334-residue protein sequence, read N- to C-terminus: Methylthioribose-1-phosphate isomerase (334 aa).

Substrate is bound by residues 44 to 46 (RGA), arginine 87, and glutamine 192. Residue aspartate 233 is the Proton donor of the active site. A substrate-binding site is contributed by 243–244 (NK).

It belongs to the eIF-2B alpha/beta/delta subunits family. MtnA subfamily.

The enzyme catalyses 5-(methylsulfanyl)-alpha-D-ribose 1-phosphate = 5-(methylsulfanyl)-D-ribulose 1-phosphate. It participates in amino-acid biosynthesis; L-methionine biosynthesis via salvage pathway; L-methionine from S-methyl-5-thio-alpha-D-ribose 1-phosphate: step 1/6. Functionally, catalyzes the interconversion of methylthioribose-1-phosphate (MTR-1-P) into methylthioribulose-1-phosphate (MTRu-1-P). This is Methylthioribose-1-phosphate isomerase from Dehalococcoides mccartyi (strain ATCC BAA-2266 / KCTC 15142 / 195) (Dehalococcoides ethenogenes (strain 195)).